The chain runs to 79 residues: UPF0401 protein YkfF (79 aa).

The protein belongs to the UPF0401 family.

This is UPF0401 protein YkfF (ykfF) from Escherichia coli (strain K12).